The following is a 393-amino-acid chain: NAD(P)H-quinone oxidoreductase subunit H, chloroplastic (393 aa).

It belongs to the complex I 49 kDa subunit family. NDH is composed of at least 16 different subunits, 5 of which are encoded in the nucleus.

It is found in the plastid. The protein localises to the chloroplast thylakoid membrane. The catalysed reaction is a plastoquinone + NADH + (n+1) H(+)(in) = a plastoquinol + NAD(+) + n H(+)(out). It catalyses the reaction a plastoquinone + NADPH + (n+1) H(+)(in) = a plastoquinol + NADP(+) + n H(+)(out). In terms of biological role, NDH shuttles electrons from NAD(P)H:plastoquinone, via FMN and iron-sulfur (Fe-S) centers, to quinones in the photosynthetic chain and possibly in a chloroplast respiratory chain. The immediate electron acceptor for the enzyme in this species is believed to be plastoquinone. Couples the redox reaction to proton translocation, and thus conserves the redox energy in a proton gradient. This chain is NAD(P)H-quinone oxidoreductase subunit H, chloroplastic, found in Daucus carota (Wild carrot).